A 418-amino-acid chain; its full sequence is UDP-N-acetylglucosamine 1-carboxyvinyltransferase (418 aa).

22–23 provides a ligand contact to phosphoenolpyruvate; the sequence is KN. UDP-N-acetyl-alpha-D-glucosamine is bound at residue R92. C116 serves as the catalytic Proton donor. C116 carries the 2-(S-cysteinyl)pyruvic acid O-phosphothioketal modification. Residues 121–125, D305, and L327 contribute to the UDP-N-acetyl-alpha-D-glucosamine site; that span reads RPIDL.

This sequence belongs to the EPSP synthase family. MurA subfamily.

Its subcellular location is the cytoplasm. It carries out the reaction phosphoenolpyruvate + UDP-N-acetyl-alpha-D-glucosamine = UDP-N-acetyl-3-O-(1-carboxyvinyl)-alpha-D-glucosamine + phosphate. Its pathway is cell wall biogenesis; peptidoglycan biosynthesis. Its function is as follows. Cell wall formation. Adds enolpyruvyl to UDP-N-acetylglucosamine. The protein is UDP-N-acetylglucosamine 1-carboxyvinyltransferase of Campylobacter jejuni subsp. doylei (strain ATCC BAA-1458 / RM4099 / 269.97).